Here is a 1342-residue protein sequence, read N- to C-terminus: DNA-directed RNA polymerase subunit beta (1342 aa).

The protein belongs to the RNA polymerase beta chain family. In terms of assembly, the RNAP catalytic core consists of 2 alpha, 1 beta, 1 beta' and 1 omega subunit. When a sigma factor is associated with the core the holoenzyme is formed, which can initiate transcription.

It carries out the reaction RNA(n) + a ribonucleoside 5'-triphosphate = RNA(n+1) + diphosphate. DNA-dependent RNA polymerase catalyzes the transcription of DNA into RNA using the four ribonucleoside triphosphates as substrates. In Pasteurella multocida (strain Pm70), this protein is DNA-directed RNA polymerase subunit beta.